The following is a 432-amino-acid chain: Alcohol acyltransferase 9 (432 aa).

Residues His156 and Asp379 each act as proton acceptor in the active site.

Belongs to the plant acyltransferase family. As to expression, expressed in fruit.

The enzyme catalyses 2-(methylsulfanyl)acetyl-CoA + butan-1-ol = butyl 2-(methylsulfanyl)acetate + CoA. It catalyses the reaction ethanol + acetyl-CoA = ethyl acetate + CoA. It carries out the reaction butan-1-ol + acetyl-CoA = butyl acetate + CoA. The catalysed reaction is butan-1-ol + propanoyl-CoA = butyl propanoate + CoA. Involved in the biosynthesis of volatile esters which confer kiwifruit flavor. Alcohol acyl transferase that can use a wide range of alcohols as substrate to produce esters. Exhibits acetyl-CoA:alcohol O-acyltransferase activity. The polypeptide is Alcohol acyltransferase 9 (Actinidia deliciosa (Kiwi)).